The chain runs to 458 residues: Serine/threonine-protein kinase tricornered (458 aa).

In terms of domain architecture, Protein kinase spans 92 to 389 (FEALKVIGRG…LEDLKSVPFF (298 aa)). ATP-binding positions include 98–106 (IGRGAFGEV) and K121. The interval 118–179 (YAMKVLRKAD…EFLPGGDMMT (62 aa)) is interaction with mats and Mob1. The active-site Proton acceptor is D215. Residue S287 is modified to Phosphoserine. One can recognise an AGC-kinase C-terminal domain in the interval 390 to 458 (RGVDWEHIRE…YKRFEVRNLE (69 aa)). At T448 the chain carries Phosphothreonine.

Belongs to the protein kinase superfamily. AGC Ser/Thr protein kinase family. In terms of assembly, interacts with, and is activated by, Mob1. It depends on Mg(2+) as a cofactor.

It is found in the cytoplasm. The protein resides in the nucleus. It catalyses the reaction L-seryl-[protein] + ATP = O-phospho-L-seryl-[protein] + ADP + H(+). The catalysed reaction is L-threonyl-[protein] + ATP = O-phospho-L-threonyl-[protein] + ADP + H(+). Functionally, serine/threonine-protein kinase involved in controlling cell structure and proliferation of a variety of polarized outgrowths including epidermal hairs, bristles, arista laterals, and dendrites. Together with fry, maintains the integrity of epidermal hairs and is an essential component of the signaling pathway regulating dendritic branching of sensory neurons. Reduces neurite outgrowth by phosphorylating pav/pavarotti, thereby inhibiting its function in microtubule-microtubule sliding. The polypeptide is Serine/threonine-protein kinase tricornered (Drosophila pseudoobscura pseudoobscura (Fruit fly)).